The sequence spans 366 residues: MAAARHSTLDFKLGAKADGEAILKGLQSIFQEQGMTESVHTWQDHGYLATYTNKNGSFANLRIYPHGLVLLDLQSYDSDVQGKQETDSLLNKIEEKMKELSQDSTGRVKRLPPIVRGGAIDRYWPTADGRLVEYDIDEVVYDEDSPYQNIKILHSKQFGNILILSGDVNLAESDLAYTRAIMGSGKEDYTGKDVLILGGGDGGILCEIVKLKPKMVTMVEIDQMVIDGCKKYMRRTCGDVLDNLRGDCYQVLIEDCIPVLKMYAKEGREFDYVINDLTAVPISTSPEEDSTWDFLRLILDLSMKVLKQDGKYFTQGNCVNLTEALSLYEEQLGRLYCPVEFSKEIVCVPSYLELWVFYTVWKKAKP.

A2 is subject to N-acetylalanine. Position 57 is a phosphoserine (S57). In terms of domain architecture, PABS spans 122 to 362; that stretch reads RYWPTADGRL…ELWVFYTVWK (241 aa). Q148 provides a ligand contact to S-adenosyl 3-(methylsulfanyl)propylamine. Y177 and D201 together coordinate spermidine. S-adenosyl 3-(methylsulfanyl)propylamine-binding positions include E220 and 255–256; that span reads DC. The active-site Proton acceptor is D276. Residues Y351 and E353 each coordinate spermidine.

This sequence belongs to the spermidine/spermine synthase family. In terms of assembly, homodimer. Dimerization is mediated through the N-terminal domain and seems to be required for activity as deletion of the N-terminal domain causes complete loss of activity.

The catalysed reaction is S-adenosyl 3-(methylsulfanyl)propylamine + spermidine = spermine + S-methyl-5'-thioadenosine + H(+). The protein operates within amine and polyamine biosynthesis; spermine biosynthesis; spermine from spermidine: step 1/1. Its function is as follows. Catalyzes the production of spermine from spermidine and decarboxylated S-adenosylmethionine (dcSAM). Required for normal viability, growth and fertility. The polypeptide is Spermine synthase (Sms) (Mus musculus (Mouse)).